We begin with the raw amino-acid sequence, 517 residues long: Cobyric acid synthase (517 aa).

In terms of domain architecture, GATase cobBQ-type spans 253 to 453; it reads EVEIAVIKLP…IHGILDNDSL (201 aa). Cysteine 334 functions as the Nucleophile in the catalytic mechanism. Histidine 445 is an active-site residue.

Belongs to the CobB/CobQ family. CobQ subfamily.

Its pathway is cofactor biosynthesis; adenosylcobalamin biosynthesis. Its function is as follows. Catalyzes amidations at positions B, D, E, and G on adenosylcobyrinic A,C-diamide. NH(2) groups are provided by glutamine, and one molecule of ATP is hydrogenolyzed for each amidation. This is Cobyric acid synthase from Moorella thermoacetica (strain ATCC 39073 / JCM 9320).